A 617-amino-acid polypeptide reads, in one-letter code: Chaperone protein DnaK (617 aa).

The interval 579-617 is disordered; sequence KAQQEAQQASGEAGSADARGPDETVVDADYEVVDDEKRK. Residues 580–594 are compositionally biased toward low complexity; it reads AQQEAQQASGEAGSA. The segment covering 602–617 has biased composition (acidic residues); that stretch reads TVVDADYEVVDDEKRK.

Belongs to the heat shock protein 70 family.

In terms of biological role, acts as a chaperone. This is Chaperone protein DnaK from Methanosarcina acetivorans (strain ATCC 35395 / DSM 2834 / JCM 12185 / C2A).